Consider the following 507-residue polypeptide: Phosphoprotein (507 aa).

An interaction with N0 region spans residues 1–48; that stretch reads MAEEQARHVKNGLECIRALKAEPIGSLAIEEAMAAWSEISDNPGQERA. Disordered stretches follow at residues 40-100, 134-163, 201-232, 250-273, and 285-309; these read SDNP…PRNL, GLDG…TEGY, NNFP…KKGT, GATQ…GNVP, and WTPE…HYDD. S86 bears the Phosphoserine mark. Residues 134 to 145 show a composition bias toward low complexity; it reads GLDGDSTLSGGD. The span at 146 to 160 shows a compositional bias: acidic residues; the sequence is NESENSDVDIGEPDT. Position 151 is a phosphoserine (S151). A compositionally biased stretch (low complexity) spans 260-270; it reads SEPSGPGAPAG. A compositionally biased stretch (polar residues) spans 286–301; that stretch reads TPESGTTISPRSQNNE. A multimerization region spans residues 304-376; sequence GDHYDDELFS…LSSIMIAIPG (73 aa). Position 314 (D314) interacts with Ca(2+). 2 interaction with the L polymerase regions span residues 361–377 and 396–410; these read STLE…IPGL and PIIG…AEVL. The segment at 457-507 is x domain (XD); the sequence is GPASRSVIRSIIKSSRLEEDRKRYLMTLLDDIKGANDLAKFHQMLMKIIMK. Residues 459 to 507 form an interaction with the nucleocapsid (N-RNA) region; sequence ASRSVIRSIIKSSRLEEDRKRYLMTLLDDIKGANDLAKFHQMLMKIIMK.

This sequence belongs to the morbillivirus P protein family. In terms of assembly, homotetramer. Interacts (via multimerization domain and XD domain) with polymerase L; this interaction forms the polymerase L-P complex. Interacts (via N-terminus) with N0 (via Ncore); this interaction allows P to chaperon N0 to avoid N polymerization and non-specific RNA binding before encapsidation. Interacts (via C-terminus) with N-RNA template (via Ntail); this interaction maintains the P/L complex anchored to the nucleocapsid template during the sequential transcription. Interacts (via C-terminus) with protein C this interaction allows C to associate with the ribonucleocapsid. In terms of processing, phosphorylation on serines by host CK2 is necessary for the formation of viral factories.

Its function is as follows. Essential cofactor of the RNA polymerase L that plays a central role in the transcription and replication by forming the polymerase complex with RNA polymerase L and recruiting L to the genomic N-RNA template for RNA synthesis. Also plays a central role in the encapsidation of nascent RNA chains by forming the encapsidation complex with the nucleocapsid protein N (N-P complex). Acts as a chaperone for newly synthesized free N protein, so-called N0, allowing encapsidation of nascent RNA chains during replication. The nucleoprotein protein N prevents excessive phosphorylation of P, which leads to down-regulation of viral transcription/ replication. Participates, together with N, in the formation of viral factories (viroplasms), which are large inclusions in the host cytoplasm where replication takes place. The chain is Phosphoprotein (P/V) from Measles virus (strain Edmonston B) (MeV).